A 61-amino-acid chain; its full sequence is Large ribosomal subunit protein uL30 (61 aa).

This sequence belongs to the universal ribosomal protein uL30 family. In terms of assembly, part of the 50S ribosomal subunit.

This is Large ribosomal subunit protein uL30 from Latilactobacillus sakei subsp. sakei (strain 23K) (Lactobacillus sakei subsp. sakei).